Here is a 268-residue protein sequence, read N- to C-terminus: GTP cyclohydrolase FolE2 (268 aa).

The protein belongs to the GTP cyclohydrolase IV family.

It carries out the reaction GTP + H2O = 7,8-dihydroneopterin 3'-triphosphate + formate + H(+). It participates in cofactor biosynthesis; 7,8-dihydroneopterin triphosphate biosynthesis; 7,8-dihydroneopterin triphosphate from GTP: step 1/1. In terms of biological role, converts GTP to 7,8-dihydroneopterin triphosphate. The polypeptide is GTP cyclohydrolase FolE2 (Paraburkholderia phymatum (strain DSM 17167 / CIP 108236 / LMG 21445 / STM815) (Burkholderia phymatum)).